We begin with the raw amino-acid sequence, 75 residues long: Acyl carrier protein (75 aa).

Positions 1–75 constitute a Carrier domain; it reads MALFDDVKEV…GDAIKFIENV (75 aa). Serine 36 carries the O-(pantetheine 4'-phosphoryl)serine modification.

The protein belongs to the acyl carrier protein (ACP) family. In terms of processing, 4'-phosphopantetheine is transferred from CoA to a specific serine of apo-ACP by AcpS. This modification is essential for activity because fatty acids are bound in thioester linkage to the sulfhydryl of the prosthetic group.

It localises to the cytoplasm. Its pathway is lipid metabolism; fatty acid biosynthesis. In terms of biological role, carrier of the growing fatty acid chain in fatty acid biosynthesis. The sequence is that of Acyl carrier protein from Sulfurovum sp. (strain NBC37-1).